The chain runs to 398 residues: Chalcone synthase (398 aa).

C169 is a catalytic residue.

It belongs to the thiolase-like superfamily. Chalcone/stilbene synthases family.

The catalysed reaction is (E)-4-coumaroyl-CoA + 3 malonyl-CoA + 3 H(+) = 2',4,4',6'-tetrahydroxychalcone + 3 CO2 + 4 CoA. It functions in the pathway secondary metabolite biosynthesis; flavonoid biosynthesis. Its function is as follows. The primary product of this enzyme is 4,2',4',6'-tetrahydroxychalcone (also termed naringenin-chalcone or chalcone) which can under specific conditions spontaneously isomerize into naringenin. The sequence is that of Chalcone synthase (CHS) from Petroselinum crispum (Parsley).